A 345-amino-acid polypeptide reads, in one-letter code: Phosphoribosylformylglycinamidine cyclo-ligase (345 aa).

It belongs to the AIR synthase family.

It localises to the cytoplasm. It catalyses the reaction 2-formamido-N(1)-(5-O-phospho-beta-D-ribosyl)acetamidine + ATP = 5-amino-1-(5-phospho-beta-D-ribosyl)imidazole + ADP + phosphate + H(+). The protein operates within purine metabolism; IMP biosynthesis via de novo pathway; 5-amino-1-(5-phospho-D-ribosyl)imidazole from N(2)-formyl-N(1)-(5-phospho-D-ribosyl)glycinamide: step 2/2. This Salmonella typhi protein is Phosphoribosylformylglycinamidine cyclo-ligase.